Here is a 352-residue protein sequence, read N- to C-terminus: Protein-glutamate methylesterase/protein-glutamine glutaminase 2 (352 aa).

Positions methionine 1–glutamate 116 constitute a Response regulatory domain. A 4-aspartylphosphate modification is found at aspartate 50. In terms of domain architecture, CheB-type methylesterase spans alanine 162–glutamine 352. Active-site residues include serine 174, histidine 200, and aspartate 296.

It belongs to the CheB family. Post-translationally, phosphorylated by CheA. Phosphorylation of the N-terminal regulatory domain activates the methylesterase activity.

The protein localises to the cytoplasm. It catalyses the reaction [protein]-L-glutamate 5-O-methyl ester + H2O = L-glutamyl-[protein] + methanol + H(+). It carries out the reaction L-glutaminyl-[protein] + H2O = L-glutamyl-[protein] + NH4(+). Involved in chemotaxis. Part of a chemotaxis signal transduction system that modulates chemotaxis in response to various stimuli. Catalyzes the demethylation of specific methylglutamate residues introduced into the chemoreceptors (methyl-accepting chemotaxis proteins or MCP) by CheR. Also mediates the irreversible deamidation of specific glutamine residues to glutamic acid. The sequence is that of Protein-glutamate methylesterase/protein-glutamine glutaminase 2 from Xanthomonas campestris pv. campestris (strain ATCC 33913 / DSM 3586 / NCPPB 528 / LMG 568 / P 25).